Reading from the N-terminus, the 219-residue chain is Ribose-5-phosphate isomerase A (219 aa).

Residues 28–31 (TGST), 81–84 (DGAD), and 94–97 (KGGG) contribute to the substrate site. Residue E103 is the Proton acceptor of the active site. K121 is a binding site for substrate.

This sequence belongs to the ribose 5-phosphate isomerase family. Homodimer.

It catalyses the reaction aldehydo-D-ribose 5-phosphate = D-ribulose 5-phosphate. It participates in carbohydrate degradation; pentose phosphate pathway; D-ribose 5-phosphate from D-ribulose 5-phosphate (non-oxidative stage): step 1/1. In terms of biological role, catalyzes the reversible conversion of ribose-5-phosphate to ribulose 5-phosphate. The polypeptide is Ribose-5-phosphate isomerase A (Shewanella pealeana (strain ATCC 700345 / ANG-SQ1)).